The following is a 109-amino-acid chain: Putative transposase MJ0856.1 (109 aa).

The Zn(2+) site is built by cysteine 36, cysteine 39, cysteine 62, and cysteine 65.

This sequence belongs to the transposase 35 family.

The chain is Putative transposase MJ0856.1 from Methanocaldococcus jannaschii (strain ATCC 43067 / DSM 2661 / JAL-1 / JCM 10045 / NBRC 100440) (Methanococcus jannaschii).